Here is a 94-residue protein sequence, read N- to C-terminus: Small ribosomal subunit protein bS6 (94 aa).

It belongs to the bacterial ribosomal protein bS6 family.

Its function is as follows. Binds together with bS18 to 16S ribosomal RNA. The polypeptide is Small ribosomal subunit protein bS6 (Desulforudis audaxviator (strain MP104C)).